The chain runs to 317 residues: Neurogenic differentiation factor 6-B (317 aa).

2 disordered regions span residues 1 to 90 (MLTV…ERSR) and 297 to 317 (DLHP…GYHN). A compositionally biased stretch (acidic residues) spans 37–56 (EAEDDNTDREEEEEREEDEN). Residues 59-69 (PKKKGPRKKKS) are compositionally biased toward basic residues. A Nuclear localization signal motif is present at residues 65–70 (RKKKSE). Residues 70–90 (EGRGDRVKMRRQEANARERSR) are compositionally biased toward basic and acidic residues. One can recognise a bHLH domain in the interval 78–130 (MRRQEANARERSRMHGLNDALESLRKVVPCYSKTQKLSKIETLRLAKNYIWAL). The segment covering 301–317 (RSQSFQSQDELNTGYHN) has biased composition (polar residues).

In terms of assembly, efficient DNA binding requires dimerization with another bHLH protein. In terms of tissue distribution, embryonic olfactory bulbs and olfactory placodes. In adult, expressed in brain and eye.

It localises to the nucleus. Differentiation factor required for neurogenesis. Does not act as an upstream activator of isl1. This Danio rerio (Zebrafish) protein is Neurogenic differentiation factor 6-B.